Here is a 327-residue protein sequence, read N- to C-terminus: Beta-ketoacyl-[acyl-carrier-protein] synthase III 2 (327 aa).

Residues Cys114 and His251 contribute to the active site. The ACP-binding stretch occupies residues 252 to 256; the sequence is SANLR. The active site involves Asn281.

This sequence belongs to the thiolase-like superfamily. FabH family. Homodimer.

The protein resides in the cytoplasm. It carries out the reaction malonyl-[ACP] + acetyl-CoA + H(+) = 3-oxobutanoyl-[ACP] + CO2 + CoA. The protein operates within lipid metabolism; fatty acid biosynthesis. In terms of biological role, catalyzes the condensation reaction of fatty acid synthesis by the addition to an acyl acceptor of two carbons from malonyl-ACP. Catalyzes the first condensation reaction which initiates fatty acid synthesis and may therefore play a role in governing the total rate of fatty acid production. Possesses both acetoacetyl-ACP synthase and acetyl transacylase activities. Its substrate specificity determines the biosynthesis of branched-chain and/or straight-chain of fatty acids. In Bacillus cereus (strain ATCC 14579 / DSM 31 / CCUG 7414 / JCM 2152 / NBRC 15305 / NCIMB 9373 / NCTC 2599 / NRRL B-3711), this protein is Beta-ketoacyl-[acyl-carrier-protein] synthase III 2.